The primary structure comprises 82 residues: RNA-binding protein Hfq (82 aa).

Residues 11–71 (DTFLNSVRKS…ISTIMPAQPV (61 aa)) enclose the Sm domain.

The protein belongs to the Hfq family. As to quaternary structure, homohexamer.

Functionally, RNA chaperone that binds small regulatory RNA (sRNAs) and mRNAs to facilitate mRNA translational regulation in response to envelope stress, environmental stress and changes in metabolite concentrations. Also binds with high specificity to tRNAs. The sequence is that of RNA-binding protein Hfq from Caulobacter vibrioides (strain ATCC 19089 / CIP 103742 / CB 15) (Caulobacter crescentus).